The sequence spans 114 residues: Lymphotactin (114 aa).

A signal peptide spans Met1 to Gly21. Cys32 and Cys69 are disulfide-bonded. Residues Lys92–Gly114 form a disordered region. Positions Thr100–Gly114 are enriched in polar residues.

Belongs to the intercrine gamma family. Expressed in activated CD8(+) T cells. In the thymus, expressed by medullary thymic epithelial cells.

The protein resides in the secreted. Functionally, chemotactic activity for lymphocytes but not for monocytes or neutrophils. In thymus, mediates medullary accumulation of thymic dendritic cells and contributes to regulatoy T cell development, playing a role in self-tolerance establishment. This chain is Lymphotactin (Xcl1), found in Mus musculus (Mouse).